The primary structure comprises 937 residues: uncharacterized protein (937 aa).

Thr2 bears the N-acetylthreonine mark. The disordered stretch occupies residues 281–937 (NESPSSNINT…KKGKGKGGRK (657 aa)). Low complexity predominate over residues 290–308 (TTTTSTTTTTTTTTSSPVV). The active-site Charge relay system is the Thr292. 8 stretches are compositionally biased toward basic and acidic residues: residues 309–402 (EESK…EKQQ), 411–431 (AEKE…RLEA), 469–489 (AEKE…KLEA), 512–532 (AEKE…KLEA), 600–615 (AEKE…KLEA), 667–687 (AEKE…KLEA), 738–758 (AEKE…RLEA), and 780–872 (AEKE…KVEE). Residues 345 to 802 (VDDSKEKEEK…KAAEETKVEE (458 aa)) are a coiled coil. Acidic residues predominate over residues 887 to 897 (EETEEGEEVDE). The span at 898 to 924 (ASNTTTEQTTTNANQPKKPNNNNNNNK) shows a compositional bias: low complexity. A compositionally biased stretch (basic residues) spans 925–937 (GKGKKGKGKGGRK).

Belongs to the AB hydrolase superfamily.

This is an uncharacterized protein from Dictyostelium discoideum (Social amoeba).